We begin with the raw amino-acid sequence, 306 residues long: Acetyl-coenzyme A carboxylase carboxyl transferase subunit beta (306 aa).

The CoA carboxyltransferase N-terminal domain maps to 25–294; the sequence is LWIKDPTSGE…VVTPSPPSPT (270 aa). A disordered region spans residues 284–306; it reads AVVTPSPPSPTDSQTSLSKTKAA.

This sequence belongs to the AccD/PCCB family. In terms of assembly, acetyl-CoA carboxylase is a heterohexamer composed of biotin carboxyl carrier protein (AccB), biotin carboxylase (AccC) and two subunits each of ACCase subunit alpha (AccA) and ACCase subunit beta (AccD).

Its subcellular location is the cytoplasm. It carries out the reaction N(6)-carboxybiotinyl-L-lysyl-[protein] + acetyl-CoA = N(6)-biotinyl-L-lysyl-[protein] + malonyl-CoA. It participates in lipid metabolism; malonyl-CoA biosynthesis; malonyl-CoA from acetyl-CoA: step 1/1. In terms of biological role, component of the acetyl coenzyme A carboxylase (ACC) complex. Biotin carboxylase (BC) catalyzes the carboxylation of biotin on its carrier protein (BCCP) and then the CO(2) group is transferred by the transcarboxylase to acetyl-CoA to form malonyl-CoA. The chain is Acetyl-coenzyme A carboxylase carboxyl transferase subunit beta from Bartonella tribocorum (strain CIP 105476 / IBS 506).